The following is a 385-amino-acid chain: Glucans biosynthesis protein C (385 aa).

The next 10 membrane-spanning stretches (helical) occupy residues 17–39, 54–76, 88–110, 136–158, 179–198, 213–235, 242–261, 276–295, 308–330, and 334–356; these read AWLM…TWHV, FIHS…MLFL, VERV…FIML, LISH…WIFK, LSVI…RTIF, IVMQ…IFPH, TPSR…YLLN, SVIT…SFGH, FVNA…GAYI, and ITSN…IILY.

This sequence belongs to the acyltransferase 3 family. OpgC subfamily.

The protein resides in the cell membrane. It functions in the pathway glycan metabolism; osmoregulated periplasmic glucan (OPG) biosynthesis. In terms of biological role, necessary for the succinyl substitution of periplasmic glucans. Could catalyze the transfer of succinyl residues from the cytoplasmic side of the membrane to the nascent glucan backbones on the periplasmic side of the membrane. This is Glucans biosynthesis protein C from Escherichia coli O157:H7.